The primary structure comprises 290 residues: Ribosomal RNA small subunit methyltransferase A (290 aa).

N27, L29, G54, E75, D100, and N125 together coordinate S-adenosyl-L-methionine.

Belongs to the class I-like SAM-binding methyltransferase superfamily. rRNA adenine N(6)-methyltransferase family. RsmA subfamily.

Its subcellular location is the cytoplasm. The catalysed reaction is adenosine(1518)/adenosine(1519) in 16S rRNA + 4 S-adenosyl-L-methionine = N(6)-dimethyladenosine(1518)/N(6)-dimethyladenosine(1519) in 16S rRNA + 4 S-adenosyl-L-homocysteine + 4 H(+). In terms of biological role, specifically dimethylates two adjacent adenosines (A1518 and A1519) in the loop of a conserved hairpin near the 3'-end of 16S rRNA in the 30S particle. May play a critical role in biogenesis of 30S subunits. The sequence is that of Ribosomal RNA small subunit methyltransferase A from Streptococcus pyogenes serotype M18 (strain MGAS8232).